Reading from the N-terminus, the 476-residue chain is Bifunctional protein HldE (476 aa).

Residues 1-318 (MAQYSAEFKQ…ENAIHARPET (318 aa)) are ribokinase. 195 to 198 (NMSE) lines the ATP pocket. The active site involves aspartate 264. Positions 344 to 476 (MTNGCFDILH…VIEKIKLLKD (133 aa)) are cytidylyltransferase.

The protein in the N-terminal section; belongs to the carbohydrate kinase PfkB family. It in the C-terminal section; belongs to the cytidylyltransferase family. In terms of assembly, homodimer.

The catalysed reaction is D-glycero-beta-D-manno-heptose 7-phosphate + ATP = D-glycero-beta-D-manno-heptose 1,7-bisphosphate + ADP + H(+). The enzyme catalyses D-glycero-beta-D-manno-heptose 1-phosphate + ATP + H(+) = ADP-D-glycero-beta-D-manno-heptose + diphosphate. The protein operates within nucleotide-sugar biosynthesis; ADP-L-glycero-beta-D-manno-heptose biosynthesis; ADP-L-glycero-beta-D-manno-heptose from D-glycero-beta-D-manno-heptose 7-phosphate: step 1/4. Its pathway is nucleotide-sugar biosynthesis; ADP-L-glycero-beta-D-manno-heptose biosynthesis; ADP-L-glycero-beta-D-manno-heptose from D-glycero-beta-D-manno-heptose 7-phosphate: step 3/4. Its function is as follows. Catalyzes the phosphorylation of D-glycero-D-manno-heptose 7-phosphate at the C-1 position to selectively form D-glycero-beta-D-manno-heptose-1,7-bisphosphate. Functionally, catalyzes the ADP transfer from ATP to D-glycero-beta-D-manno-heptose 1-phosphate, yielding ADP-D-glycero-beta-D-manno-heptose. This Haemophilus influenzae (strain 86-028NP) protein is Bifunctional protein HldE.